The sequence spans 389 residues: uncharacterized protein (389 aa).

An N-terminal signal peptide occupies residues 1–29 (MQPSFTPSGGKWLSIAVILLVIGLVVGFA).

The protein belongs to the bacterial solute-binding protein 1 family. WtpA subfamily.

This is an uncharacterized protein from Thermoplasma volcanium (strain ATCC 51530 / DSM 4299 / JCM 9571 / NBRC 15438 / GSS1).